A 60-amino-acid polypeptide reads, in one-letter code: UPF0181 protein ESA_01442 (60 aa).

The protein belongs to the UPF0181 family.

The protein is UPF0181 protein ESA_01442 of Cronobacter sakazakii (strain ATCC BAA-894) (Enterobacter sakazakii).